The sequence spans 1669 residues: MKTITPDTTTTTSSQHQQLLIPQADQHHQPMLQQQSLLAAPPPTMIMEHVNLVDDDEKDPLALEQLEVSPSTKHTHSLRRHLPRIIVKPIPPEKKPMAPSEEAAVSTAPAPPTRLICSRRIQQQQQVKAAAAAAAAAAAAAAAAAAAAQAQATSSYPSAISPGSKAGTSQASTMREVLASIPGFSVKPRRRSNKKLTTAAQIEQTKDGKIDLETPDSILASTNLRALLNKQTFSLLPPLYQYNLIQLLPSVDREASELEQPSSSASGGSPSEAIRLSASCLNNEFFARACLEWRERLSEGEFTPENQLKLKTEAEREKNKLDPWKLKHFEPFWGEKNSRGKDKDKLESDCKNQKLSASIKSEPKPPATSQQKPLQQATCDNETELKFDLSTKCETTSAKTTVAVAVADKSSTFPPTGSQNNVLNEQQRRVLKRPSSSPSQRKQAPTTIATINLDDDLDELPSTSKDSKQPKMDEIVPNASGNVVAAPMVDVVDHSAVEMKIKDEQQHQRQHQPLINSTCDKIEPSECSKEMIVAMKQVDSKEDVDSIASAAAMPAIAAVTPHTPKPEALAPNPDVANQFVSYLQNVELAAETKAPLDNSNEADITTGTNSHDFVFSDTIDHAYFQEHQSTINHNFFTSSSSSNTATTAANKLEEHSDKPEDSPLPIASSISGSTPASSITSTSCTSSSSSSASMSSSCSSSNSGSTTTAPTTSSSAGAPTAPLTLAAAAETTLANVQAMLSTVAKLQQQQQELPVELNSNEMYQHVQHDWNFGDIKLSSSQSSGDQQRNLSHEAIDLMDVVQDADVIDDIMHNDVCHDVLGDEDEGDQEEDEDDEVVECMTEEQQLIDEDSEAVREIVDKLQQHQQQQNQQQHHQQLHIQDVVQLAQHSFMPQAHSEFGNDIGQEMLCDAVPMSAAEMEVSSTVITNSSNSNDSSNNISLCSSTNSLTINQMPHQASQQPQQNAQSNAQQQRQILVDSNGQIIGNFLLQQQRQQQQQQLLQQFTLQAAAAQQQQQQQQQHQQQQQQQQQATSSNSLGKTLPVALRNGTQQFLSPNLIAQQHQQQQQQQLEQHQQQATAQQKHQQIQQFALQQAQLHQRQLLAQAANNNLLQQQQQQQQNVALPTTQAKFIAKPLNIISMTRPANASPTTAATTANTASIPSAYANVVAVTGAQQQQSPPVPAPQQQTVQQQQLANHNSNMQQLPNVLTMKTLPPSGVPTTIAQQRLQPKMPTGKGRKATSNRLPPGAVNLERSYQICQAVIQNSPNRENLKAQLRPPAAILNQHQPTTTTAPAPINPVTLNVSTVAATPMSNITTATGSMAAAVAAAPPQNVLKQEELLVSGAVGAGALPAGLPPNVMGVGRPGVYKVIGPRMSGFPRKKYVQRKPSPTTLIRHVFSPGPGGATATAQQLQMLQQHHQSTTSPVPVQNPQQPAPEQLIHQNGNGQYVLVHRANVGAADNQAPRASSAPPMHQNQFVTVQNPLHSINGIPMGGRGRPASVDTTAGSGNVIAPPISATDALHHHHHEMQQQQQHQQPQPLGNVGAAANIVRRNIAAGPNIAYIDGSNTNSSAVALMEAGNNYIVTTNASPTAAPSPINQQPQSQPTGTQHQHPLLQLHQTGENTPPGNEATATANNCACSLNAMVICQQCGAFCHDDCIGAAKLCVACVIR.

The tract at residues 90–109 is disordered; that stretch reads IPPEKKPMAPSEEAAVSTAP. Positions 215-338 constitute a DEUBAD domain; the sequence is PDSILASTNL…FEPFWGEKNS (124 aa). 2 consecutive short sequence motifs (LXXLL motif) follow at residues 224–228 and 244–248; these read LRALL and LIQLL. The NEF motif signature appears at 283 to 285; that stretch reads NEF. A compositionally biased stretch (basic and acidic residues) spans 336-352; that stretch reads KNSRGKDKDKLESDCKN. 8 disordered regions span residues 336–378, 410–478, 635–718, 952–972, 1174–1193, 1398–1437, 1482–1505, and 1587–1610; these read KNSR…QQAT, SSTF…IVPN, FFTS…SAGA, MPHQ…QQQR, QQQS…QQQL, PGPG…PEQL, LHSI…TAGS, and SPTA…QHQH. Polar residues-rich tracts occupy residues 367-378, 413-425, and 434-450; these read ATSQQKPLQQAT, FPPT…VLNE, and PSSS…TIAT. A compositionally biased stretch (basic and acidic residues) spans 465–474; that stretch reads KDSKQPKMDE. Residues 635–650 show a composition bias toward low complexity; sequence FFTSSSSSNTATTAAN. The span at 651–661 shows a compositional bias: basic and acidic residues; sequence KLEEHSDKPED. Positions 666-718 are enriched in low complexity; sequence IASSISGSTPASSITSTSCTSSSSSSASMSSSCSSSNSGSTTTAPTTSSSAGA. Low complexity-rich tracts occupy residues 1174 to 1192 and 1404 to 1436; these read QQQS…QQQQ and TATA…APEQ. Residues 1592-1610 show a composition bias toward low complexity; it reads PSPINQQPQSQPTGTQHQH. A PHD-type; atypical zinc finger spans residues 1602 to 1666; the sequence is QPTGTQHQHP…IGAAKLCVAC (65 aa).

This sequence belongs to the Asx family. As to quaternary structure, component of the polycomb repressive deubiquitinase (PR-DUB) complex, at least composed of caly/calypso, Asx and sba (MBD5/6 homolog). Interacts (via DEUBAD domain) with caly/calypso (via ULD domain); the interaction produces a stable heterodimer with a composite binding site for ubiquitin. Two copies of the caly-Asx heterodimer assemble into a bidentate tetramer. Interacts (via PHD domain) with sba (probably via MBD domain); the interaction is important for the stability of the PR-DUB complex. Interacts with tant. Interacts with cyclin CycG. As to expression, highly expressed in nurse cells and deposited in oocytes late in oogenesis. Ubiquitous in early embryos. Late embryos show higher levels in CNS and neurectoderm.

It is found in the nucleus. The protein localises to the chromosome. Functionally, non-catalytic component of the polycomb repressive deubiquitinase (PR-DUB) complex, a complex that specifically mediates deubiquitination of histone H2A monoubiquitinated at 'Lys-119' (H2AK118ub1). Activator of the PR-DUB complex involved in ubiquitin binding and allosteric activation of calypso deubiquitinase activity. PR-DUB does not deubiquitinate monoubiquitinated histone H2B. PR-DUB is required to maintain the transcriptionally repressive state of homeotic genes throughout development. The PR-DUB complex has weak or no activity toward 'Lys-48'- and 'Lys-63'-linked polyubiquitin chains. Atypical Polycomb group protein, which may be involved in both Polycomb group (PcG) and trithorax group (trxG) complexes. PcG and trxG proteins act by forming multiprotein complexes, which are respectively required to maintain the transcriptionally repressive and transcriptionally active state of homeotic genes throughout development. PcG and trxG protein complexes are not required to initiate repression and activation, but to maintain it during later stages of development. This Drosophila melanogaster (Fruit fly) protein is Polycomb group protein Asx.